The primary structure comprises 415 residues: Phosphoglycerate transport system transcriptional regulatory protein PgtA (415 aa).

The region spanning 7-121 (SILLIDDDVD…KLLILIEDAL (115 aa)) is the Response regulatory domain. Asp-56 is modified (4-aspartylphosphate). Residues 142 to 341 (LIGRSEWMNQ…LANAAELFAV (200 aa)) form the Sigma-54 factor interaction domain. Residue 170-177 (GEHGTGRM) participates in ATP binding. A DNA-binding region (H-T-H motif) is located at residues 385 to 404 (INEVAEYLQIPRKKLYLRMK).

Phosphorylated by PgtB.

Its subcellular location is the cytoplasm. Member of the two-component regulatory system PgtB/PgtA that regulates the inducible phosphoglycerate transport system. When activated by PgtB it acts in conjunction with sigma-54 as a transcriptional activator. The polypeptide is Phosphoglycerate transport system transcriptional regulatory protein PgtA (pgtA) (Salmonella typhimurium (strain LT2 / SGSC1412 / ATCC 700720)).